The following is an 82-amino-acid chain: MSNKGQLLQDPFLNALRREHVPVSIYLVNGIKLQGQIESFDQYVVLLRNTVTQMVYKHAISTIVPGRAVNFSTGEGDEPAAA.

The region spanning 10 to 69 (DPFLNALRREHVPVSIYLVNGIKLQGQIESFDQYVVLLRNTVTQMVYKHAISTIVPGRAV) is the Sm domain.

The protein belongs to the Hfq family. As to quaternary structure, homohexamer.

Functionally, RNA chaperone that binds small regulatory RNA (sRNAs) and mRNAs to facilitate mRNA translational regulation in response to envelope stress, environmental stress and changes in metabolite concentrations. Also binds with high specificity to tRNAs. This is RNA-binding protein Hfq from Albidiferax ferrireducens (strain ATCC BAA-621 / DSM 15236 / T118) (Rhodoferax ferrireducens).